We begin with the raw amino-acid sequence, 222 residues long: Uracil-DNA glycosylase (222 aa).

Asp61 serves as the catalytic Proton acceptor.

It belongs to the uracil-DNA glycosylase (UDG) superfamily. UNG family.

The protein resides in the cytoplasm. It carries out the reaction Hydrolyzes single-stranded DNA or mismatched double-stranded DNA and polynucleotides, releasing free uracil.. Its function is as follows. Excises uracil residues from the DNA which can arise as a result of misincorporation of dUMP residues by DNA polymerase or due to deamination of cytosine. This chain is Uracil-DNA glycosylase, found in Actinobacillus succinogenes (strain ATCC 55618 / DSM 22257 / CCUG 43843 / 130Z).